The chain runs to 246 residues: Ribonuclease 3 (246 aa).

One can recognise an RNase III domain in the interval 20–145 (FSKLEKILGF…FVGAIYLDRG (126 aa)). Glu-62 is a binding site for Mg(2+). The active site involves Asp-66. Mg(2+) is bound by residues Asn-131 and Glu-134. The active site involves Glu-134. Positions 173 to 241 (SYKSLLIEWC…SKRGYFVFQS (69 aa)) constitute a DRBM domain.

Belongs to the ribonuclease III family. As to quaternary structure, homodimer. It depends on Mg(2+) as a cofactor.

It is found in the cytoplasm. The catalysed reaction is Endonucleolytic cleavage to 5'-phosphomonoester.. Its function is as follows. Digests double-stranded RNA. Involved in the processing of primary rRNA transcript to yield the immediate precursors to the large and small rRNAs (23S and 16S). Processes some mRNAs, and tRNAs when they are encoded in the rRNA operon. Processes pre-crRNA and tracrRNA of type II CRISPR loci if present in the organism. This is Ribonuclease 3 from Flavobacterium psychrophilum (strain ATCC 49511 / DSM 21280 / CIP 103535 / JIP02/86).